The sequence spans 522 residues: MASGGGGCSASERLPPPFPGMDPESEGAAGASEPEAGDSDTEGEDIFTGAAAATKPQSPKKTTSLFPIKNGSKENGIHEDQDQEPQDLFADATVELSLDSTQNNQKTMPGKTLTSHSPQEATNSPKPQPSYEELEEEEQEDQFDLTVGITDPEKIGDGMNAYVAYKVTTQTSLPMFRSRQFAVKRRFSDFLGLYEKLSEKHSQNGFIVPPPPEKSLIGMTKVKVGKEDSSSAEFLEKRRAALERYLQRIVNHPTMLQDPDVREFLEKEELPRAVGTQALSGAGLLKMFNKATDAVSKMTIKMNESDIWFEEKLQEVECEEQRLRKLHAVVETLVNHRKELALNTALFAKSLAMLGSSEDNTALSRALSQLAEVEEKIEQLHQEQANNDSFLLAELLSDYIRLLAIVRAAFDQRMKTWQRWQDAQATLQKKRESEARLLWANKPDKLQQAKDEITEWESRVTQYERDFERISTVVRKEVTRFEKEKSKDFKNHVMKYLETLLHSQQQLAKYWEAFLPEAKAIS.

Positions 1 to 144 are disordered; that stretch reads MASGGGGCSA…EEEEQEDQFD (144 aa). 2 positions are modified to phosphoserine: Ser-32 and Ser-39. The segment covering 35 to 45 has biased composition (acidic residues); that stretch reads EAGDSDTEGED. A phosphothreonine mark is found at Thr-41 and Thr-48. A compositionally biased stretch (polar residues) spans 55 to 65; sequence KPQSPKKTTSL. Residues Ser-58 and Ser-72 each carry the phosphoserine modification. Residues 71–80 are compositionally biased toward basic and acidic residues; the sequence is GSKENGIHED. Over residues 98–125 the composition is skewed to polar residues; the sequence is LDSTQNNQKTMPGKTLTSHSPQEATNSP. Residues 132–143 are compositionally biased toward acidic residues; sequence EELEEEEQEDQF. The PX domain maps to 143–272; it reads FDLTVGITDP…EFLEKEELPR (130 aa). A 1,2-diacyl-sn-glycero-3-phospho-(1D-myo-inositol-3-phosphate) is bound by residues Arg-186, Ser-188, and Lys-214. Ser-188 bears the Phosphoserine mark. Lys-237 carries the N6-acetyllysine modification. Arg-238 provides a ligand contact to a 1,2-diacyl-sn-glycero-3-phospho-(1D-myo-inositol-3-phosphate). Ser-280 carries the post-translational modification Phosphoserine. Residues 281-298 form a membrane-binding amphipathic helix region; that stretch reads GAGLLKMFNKATDAVSKM. A BAR domain is found at 302–522; that stretch reads MNESDIWFEE…AFLPEAKAIS (221 aa).

This sequence belongs to the sorting nexin family. In terms of assembly, predominantly forms heterodimers with BAR domain-containing sorting nexins SNX5, SNX6 and SNX32. Can self-associate to form homodimers. The heterodimers are proposed to self-assemble into helical arrays on the membrane to stabilize and expand local membrane curvature underlying endosomal tubule formation. Thought to be a component of the originally described retromer complex (also called SNX-BAR retromer) which is a pentamer containing the heterotrimeric retromer cargo-selective complex (CSC), also described as vacuolar protein sorting subcomplex (VPS) and a heterodimeric membrane-deforming subcomplex formed between SNX1 or SNX2 and SNX5 or SNX6 (also called SNX-BAR subcomplex); the respective CSC and SNX-BAR subcomplexes associate with low affinity. Interacts with SNX5, SNX6, SNX32, VPS26A, VPS29, VPS35, DRD5, DENND5A, KALRN, RHOG (GDP-bound form). The interaction with SNX2 is reported controversially. Interacts with DNAJC13; prevented by presence of HGS. Interacts with HGS.

The protein resides in the endosome membrane. It is found in the golgi apparatus. Its subcellular location is the trans-Golgi network membrane. The protein localises to the early endosome membrane. It localises to the cell projection. The protein resides in the lamellipodium. In terms of biological role, involved in several stages of intracellular trafficking. Interacts with membranes containing phosphatidylinositol 3-phosphate (PtdIns(3P)) or phosphatidylinositol 3,5-bisphosphate (PtdIns(3,5)P2). Acts in part as component of the retromer membrane-deforming SNX-BAR subcomplex. The SNX-BAR retromer mediates retrograde transport of cargo proteins from endosomes to the trans-Golgi network (TGN) and is involved in endosome-to-plasma membrane transport for cargo protein recycling. The SNX-BAR subcomplex functions to deform the donor membrane into a tubular profile called endosome-to-TGN transport carrier (ETC). Can sense membrane curvature and has in vitro vesicle-to-membrane remodeling activity. Involved in retrograde endosome-to-TGN transport of lysosomal enzyme receptors (IGF2R, M6PR and SORT1). Plays a role in targeting ligand-activated EGFR to the lysosomes for degradation after endocytosis from the cell surface and release from the Golgi. Involvement in retromer-independent endocytic trafficking of P2RY1 and lysosomal degradation of protease-activated receptor-1/F2R. Promotes KALRN- and RHOG-dependent but retromer-independent membrane remodeling such as lamellipodium formation; the function is dependent on GEF activity of KALRN. Required for endocytosis of DRD5 upon agonist stimulation but not for basal receptor trafficking. The polypeptide is Sorting nexin-1 (Snx1) (Mus musculus (Mouse)).